The sequence spans 122 residues: Large ribosomal subunit protein uL14c (122 aa).

The protein belongs to the universal ribosomal protein uL14 family. Part of the 50S ribosomal subunit.

It localises to the plastid. Functionally, binds to 23S rRNA. This Cuscuta exaltata (Tall dodder) protein is Large ribosomal subunit protein uL14c.